The primary structure comprises 634 residues: DNA-directed RNA polymerase subunit gamma (634 aa).

Zn(2+) contacts are provided by Cys-74, Cys-76, Cys-89, and Cys-92. Residues Asp-471, Asp-473, and Asp-475 each contribute to the Mg(2+) site.

The protein belongs to the RNA polymerase beta' chain family. RpoC1 subfamily. As to quaternary structure, in cyanobacteria the RNAP catalytic core is composed of 2 alpha, 1 beta, 1 beta', 1 gamma and 1 omega subunit. When a sigma factor is associated with the core the holoenzyme is formed, which can initiate transcription. The cofactor is Mg(2+). Zn(2+) is required as a cofactor.

The catalysed reaction is RNA(n) + a ribonucleoside 5'-triphosphate = RNA(n+1) + diphosphate. Its function is as follows. DNA-dependent RNA polymerase catalyzes the transcription of DNA into RNA using the four ribonucleoside triphosphates as substrates. The polypeptide is DNA-directed RNA polymerase subunit gamma (Synechococcus sp. (strain CC9605)).